A 202-amino-acid polypeptide reads, in one-letter code: Ribosomal RNA small subunit methyltransferase G (202 aa).

Residues G75, F80, 125–126 (VQ), and R139 each bind S-adenosyl-L-methionine.

The protein belongs to the methyltransferase superfamily. RNA methyltransferase RsmG family.

It is found in the cytoplasm. In terms of biological role, specifically methylates the N7 position of a guanine in 16S rRNA. This Mesomycoplasma hyopneumoniae (strain J / ATCC 25934 / NCTC 10110) (Mycoplasma hyopneumoniae) protein is Ribosomal RNA small subunit methyltransferase G.